The sequence spans 245 residues: 1-(5-phosphoribosyl)-5-[(5-phosphoribosylamino)methylideneamino] imidazole-4-carboxamide isomerase (245 aa).

D7 (proton acceptor) is an active-site residue. D129 functions as the Proton donor in the catalytic mechanism.

It belongs to the HisA/HisF family.

It is found in the cytoplasm. It carries out the reaction 1-(5-phospho-beta-D-ribosyl)-5-[(5-phospho-beta-D-ribosylamino)methylideneamino]imidazole-4-carboxamide = 5-[(5-phospho-1-deoxy-D-ribulos-1-ylimino)methylamino]-1-(5-phospho-beta-D-ribosyl)imidazole-4-carboxamide. The protein operates within amino-acid biosynthesis; L-histidine biosynthesis; L-histidine from 5-phospho-alpha-D-ribose 1-diphosphate: step 4/9. The polypeptide is 1-(5-phosphoribosyl)-5-[(5-phosphoribosylamino)methylideneamino] imidazole-4-carboxamide isomerase (Shewanella baltica (strain OS195)).